The primary structure comprises 242 residues: Type III pantothenate kinase (242 aa).

Residue 7 to 14 (DLGNSRFK) participates in ATP binding. Substrate is bound by residues tyrosine 91 and 98–101 (GVDR). Residue aspartate 100 is the Proton acceptor of the active site. Position 121 (threonine 121) interacts with ATP. Threonine 171 lines the substrate pocket.

This sequence belongs to the type III pantothenate kinase family. Homodimer. Requires NH4(+) as cofactor. K(+) is required as a cofactor.

The protein localises to the cytoplasm. The enzyme catalyses (R)-pantothenate + ATP = (R)-4'-phosphopantothenate + ADP + H(+). The protein operates within cofactor biosynthesis; coenzyme A biosynthesis; CoA from (R)-pantothenate: step 1/5. Its function is as follows. Catalyzes the phosphorylation of pantothenate (Pan), the first step in CoA biosynthesis. The sequence is that of Type III pantothenate kinase from Xanthomonas campestris pv. campestris (strain B100).